The sequence spans 206 residues: uncharacterized protein (206 aa).

The protein localises to the plastid. Its subcellular location is the cyanelle. This is an uncharacterized protein from Cyanophora paradoxa.